The sequence spans 256 residues: Membrane-anchored junction protein (256 aa).

Residues 1–232 (MSLKPFTYPF…HSSPPPPKEP (232 aa)) are Nuclear-facing. Disordered stretches follow at residues 143 to 197 (KRKL…TPAS) and 211 to 235 (HGLQ…PGAR). The segment covering 164 to 173 (ETSSEASSNK) has biased composition (polar residues). The span at 175–184 (PLKESKRSTD) shows a compositional bias: basic and acidic residues. Residues 233-251 (GARGFLGFLSALFPFRYFF) traverse the membrane as a helical segment. The Perinuclear space portion of the chain corresponds to 252–256 (KKSGQ).

This sequence belongs to the MAJIN family. In terms of assembly, component of the MAJIN-TERB1-TERB2 complex, composed of MAJIN, TERB1 and TERB2. As to expression, specifically expressed in germline tissues.

The protein resides in the nucleus inner membrane. It is found in the chromosome. It localises to the telomere. In terms of biological role, meiosis-specific telomere-associated protein involved in meiotic telomere attachment to the nucleus inner membrane, a crucial step for homologous pairing and synapsis. Component of the MAJIN-TERB1-TERB2 complex, which promotes telomere cap exchange by mediating attachment of telomeric DNA to the inner nuclear membrane and replacement of the protective cap of telomeric chromosomes: in early meiosis, the MAJIN-TERB1-TERB2 complex associates with telomeric DNA and the shelterin/telosome complex. During prophase, the complex matures and promotes release of the shelterin/telosome complex from telomeric DNA. In the complex, MAJIN acts as the anchoring subunit to the nucleus inner membrane. MAJIN shows DNA-binding activity, possibly for the stabilization of telomere attachment on the nucleus inner membrane. The protein is Membrane-anchored junction protein of Mus musculus (Mouse).